Reading from the N-terminus, the 379-residue chain is Probable homogentisate phytyltransferase 2, chloroplastic (379 aa).

The tract at residues 1 to 39 (MASLASPPLPCRAAATASRSGRPAPRLLGPPPPPASPLL) is disordered. Residues 1 to 65 (MASLASPPLP…WSRRDAVRVC (65 aa)) constitute a chloroplast transit peptide. Helical transmembrane passes span 121–141 (WLVF…GYIV), 174–194 (LVVL…GPFI), 195–215 (TSLY…PFRL), 220–240 (VAAF…GVYY), 252–272 (WSSP…VIAI), 299–319 (IAFL…AVAF), 328–348 (TVMV…TWVL), and 361–378 (YYRF…FFPL).

The protein belongs to the UbiA prenyltransferase family.

The protein resides in the plastid. It is found in the chloroplast thylakoid membrane. It catalyses the reaction phytyl diphosphate + homogentisate + H(+) = 2-methyl-6-phytyl-1,4-benzene-1,4-diol + CO2 + diphosphate. Its pathway is cofactor biosynthesis; tocopherol biosynthesis. Involved in the synthesis of tocopherol (vitamin E). Catalyzes the condensation of homogentisate and phytyl diphosphate to form dimethylphytylhydrquinone. This Oryza sativa subsp. japonica (Rice) protein is Probable homogentisate phytyltransferase 2, chloroplastic (HPT2).